The following is a 240-amino-acid chain: Transcriptional activator protein VanR (240 aa).

The HTH luxR-type domain occupies 169–234 (DAKPRAVLTA…QAITKAILGG (66 aa)). The segment at residues 193–212 (AWEIATIINTSERTVKFHFS) is a DNA-binding region (H-T-H motif).

The protein belongs to the autoinducer-regulated transcriptional regulatory protein family.

Probable transcriptional activator. Binds to autoinducer molecule ODHL. This is Transcriptional activator protein VanR (vanR) from Vibrio anguillarum (Listonella anguillarum).